The primary structure comprises 320 residues: Zinc finger Ran-binding domain-containing protein 2 (320 aa).

Ser9 bears the Phosphoserine mark. The segment at 9 to 40 (SDGDWICPDKKCGNVNFARRTSCNRCGREKTT) adopts a RanBP2-type 1 zinc-finger fold. Residues Lys18, Lys54, and Lys92 each carry the N6-acetyllysine modification. The RanBP2-type 2 zinc-finger motif lies at 65-94 (SANDWQCKTCSNVNWARRSECNMCNTPKYA). Residues 117-320 (REESDGEYDE…QVIGENTKQP (204 aa)) are disordered. Residues Ser120, Ser153, Ser181, Ser188, and Ser193 each carry the phosphoserine modification. Over residues 150-163 (DKESEGEEEDEDED) the composition is skewed to acidic residues. Residues 151–320 (KESEGEEEDE…QVIGENTKQP (170 aa)) form a required for nuclear targeting region. Residues 196–210 (KKSNRRSRSKSRSSH) are compositionally biased toward basic residues. Composition is skewed to low complexity over residues 211-224 (SRSS…SSSR) and 232-242 (RSSSSSQSRSR). Residues 251–273 (SRGSKSRSSSRSHRGSSSPRKRS) are compositionally biased toward basic residues.

Belongs to the ZRANB2 family. In terms of assembly, interacts with the C-terminal half of SNRP70/U1-70K, the Arg/Ser-rich domain of AKAP17A as well as with U2AF1 and CLK1. Post-translationally, phosphorylated on Ser-310 upon DNA damage, probably by ATM or ATR.

The protein resides in the nucleus. Splice factor required for alternative splicing of TRA2B/SFRS10 transcripts. Binds to ssRNA containing the consensus sequence 5'-AGGUAA-3'. May interfere with constitutive 5'-splice site selection. This chain is Zinc finger Ran-binding domain-containing protein 2, found in Pongo abelii (Sumatran orangutan).